A 920-amino-acid chain; its full sequence is Glutamate receptor 2.2 (920 aa).

An N-terminal signal peptide occupies residues 1–24 (MKNSKLFFRFLFLFFFFCLESSRG). Over 25-580 (QDNGKTQVNI…DKFSFLKPLS (556 aa)) the chain is Extracellular. Asparagine 53, asparagine 204, asparagine 267, asparagine 331, asparagine 342, asparagine 477, and asparagine 542 each carry an N-linked (GlcNAc...) asparagine glycan. Residues 581–601 (IELWLTTLVFFFLVGISVWTL) traverse the membrane as a helical segment. Over 602–610 (EHRVNSDFR) the chain is Cytoplasmic. A helical membrane pass occupies residues 611–631 (GPANYQASTIFWFAFSTMVFA). The Cytoplasmic segment spans residues 632 to 635 (PRER). Residues 636–656 (VLSFGARSLVVTWYFVLLVLT) traverse the membrane as a helical segment. Residues 657 to 830 (QSYTASLASL…VTAIQLGVGS (174 aa)) are Extracellular-facing. N-linked (GlcNAc...) asparagine glycosylation occurs at asparagine 702. The helical transmembrane segment at 831 to 851 (FWFLFLVVFVVCVLALGKFTF) threads the bilayer. The Cytoplasmic segment spans residues 852–920 (CFLWKTKGKD…QVNQTDPDCL (69 aa)).

The protein belongs to the glutamate-gated ion channel (TC 1.A.10.1) family. In terms of assembly, may form heteromers. As to expression, expressed predominantly in roots.

It is found in the membrane. Functionally, glutamate-gated receptor that probably acts as a non-selective cation channel. May be involved in light-signal transduction and calcium homeostasis via the regulation of calcium influx into cells. The chain is Glutamate receptor 2.2 (GLR2.2) from Arabidopsis thaliana (Mouse-ear cress).